The sequence spans 894 residues: Histone-lysine N-methyltransferase PRDM9 (894 aa).

Disordered regions lie at residues 1-23 and 143-174; these read MSPE…RKPM and SGSE…LRKK. The region spanning 23–86 is the KRAB-related domain; it reads MVKDAFKDIS…RRQAIKLQVD (64 aa). A compositionally biased stretch (polar residues) spans 143 to 164; that stretch reads SGSEQAQKPVSPSGEASTSGQH. 4 residues coordinate Zn(2+): C205, C208, C216, and H219. The SET domain maps to 244 to 358; that stretch reads PGLRIGPSGI…PGCELLVWYG (115 aa). Residues 256 to 258, Y291, and 320 to 321 each bind S-adenosyl-L-methionine; these read AGL and NC. 288-294 is a substrate binding site; sequence NNGYSWL. Y357 lines the substrate pocket. K368 carries the N6,N6,N6-trimethyllysine; alternate modification. At K368 the chain carries N6-methyllysine; alternate. 2 positions are modified to N6-methyllysine: K372 and K374. The C2H2-type 1 zinc-finger motif lies at 388–411; sequence HPCPSCCLAFSSQKFLSQHVERNH. C390, C393, H406, and H411 together coordinate Zn(2+). Residues 408 to 469 are disordered; it reads ERNHSSQNFP…SKLLNKRTWQ (62 aa). The segment covering 444 to 461 has biased composition (basic and acidic residues); that stretch reads PHSRNDKTKGQEIKERSK. Residues 524-546 form a C2H2-type 2; degenerate zinc finger; that stretch reads VKYGECGQGFSVKSDVITHQRTH. C2H2-type zinc fingers lie at residues 552-574, 580-602, 608-630, 636-658, 664-686, 692-714, 720-742, 748-770, 776-798, 804-826, 832-854, and 860-882; these read YVCR…QRIH, YVCR…QRTH, and YVCR…QRRH. Zn(2+)-binding residues include C722, C725, H738, H742, C750, C753, H766, H770, C778, C781, H794, H798, C806, C809, H822, and H826. The DNA-binding stretch occupies residues 730–820; sequence SNKSHLLRHQ…RGFSNKSHLL (91 aa).

Belongs to the class V-like SAM-binding methyltransferase superfamily. Homodimer. Interacts with EHMT2 and CDYL; interaction only takes place when PRDM9 is bound to hotspot DNA. Interacts with CXXC1; this interaction does not link PRDM9-activated recombination hotspot sites with DSB machinery and is not required for the hotspot recognition pathway. Forms a complex with EWSR1, REC8, SYCP3 and SYCP1; complex formation is dependent of phosphorylated form of REC8 and requires PRDM9 bound to hotspot DNA; EWSR1 joins PRDM9 with the chromosomal axis through REC8. In terms of processing, mono-methylated; automethylated. Tri-methylated; automethylated. Mono-methylation is predominant; automethylation is lower and slower than H3 peptide methylation and is in a highest S-adenosyl-L-methionine concentration-dependent. There are two major sites for automethylation at Lys-368 and Lys-374. Lysines can be simultaneously methylated, such as Lys-368(me3)/Lys-372(me1), Lys-368(me1)/Lys-374(me1) and Lys-368(me1)/Lys-372(me1)/Lys-374(me1). Automethylation is an intramolecular (cis) process.

The protein resides in the nucleus. The protein localises to the chromosome. It carries out the reaction L-lysyl-[protein] + S-adenosyl-L-methionine = N(6)-methyl-L-lysyl-[protein] + S-adenosyl-L-homocysteine + H(+). It catalyses the reaction N(6)-methyl-L-lysyl-[protein] + S-adenosyl-L-methionine = N(6),N(6)-dimethyl-L-lysyl-[protein] + S-adenosyl-L-homocysteine + H(+). The enzyme catalyses L-lysyl(4)-[histone H3] + 3 S-adenosyl-L-methionine = N(6),N(6),N(6)-trimethyl-L-lysyl(4)-[histone H3] + 3 S-adenosyl-L-homocysteine + 3 H(+). The catalysed reaction is L-lysyl(36)-[histone H3] + 3 S-adenosyl-L-methionine = N(6),N(6),N(6)-trimethyl-L-lysyl(36)-[histone H3] + 3 S-adenosyl-L-homocysteine + 3 H(+). It carries out the reaction L-lysyl(9)-[histone H3] + 3 S-adenosyl-L-methionine = N(6),N(6),N(6)-trimethyl-L-lysyl(9)-[histone H3] + 3 S-adenosyl-L-homocysteine + 3 H(+). It catalyses the reaction L-lysyl(20)-[histone H4] + S-adenosyl-L-methionine = N(6)-methyl-L-lysyl(20)-[histone H4] + S-adenosyl-L-homocysteine + H(+). The enzyme catalyses N(6)-methyl-L-lysyl(20)-[histone H4] + S-adenosyl-L-methionine = N(6),N(6)-dimethyl-L-lysyl(20)-[histone H4] + S-adenosyl-L-homocysteine + H(+). With respect to regulation, inhibited by suramin with an IC(50) of 4.1 uM. In terms of biological role, histone methyltransferase that sequentially mono-, di-, and tri-methylates both 'Lys-4' (H3K4) and 'Lys-36' (H3K36) of histone H3 to produce respectively trimethylated 'Lys-4' (H3K4me3) and trimethylated 'Lys-36' (H3K36me3) histone H3 and plays a key role in meiotic prophase by determining hotspot localization thereby promoting meiotic recombination. Can also methylate all four core histones with H3 being the best substrate and the most highly modified. Is also able, on one hand, to mono and di-methylate H4K20 and on other hand to trimethylate H3K9 with the di-methylated H3K9 as the best substrate. During meiotic prophase, binds specific DNA sequences through its zinc finger domains thereby determining hotspot localization where it promotes local H3K4me3 and H3K36me3 enrichment on the same nucleosomes through its histone methyltransferase activity. Thereby promotes double-stranded breaks (DSB) formation, at this subset of PRDM9-binding sites, that initiates meiotic recombination for the proper meiotic progression. During meiotic progression hotspot-bound PRDM9 interacts with several complexes; in early leptonema binds CDYL and EHMT2 followed by EWSR1 and CXXC1 by the end of leptonema. EWSR1 joins PRDM9 with the chromosomal axis through REC8. In this way, controls the DSB repair pathway, pairing of homologous chromosomes and sex body formation. Moreover plays a central role in the transcriptional activation of genes during early meiotic prophase thanks to H3K4me3 and H3K36me3 enrichment that represents a specific tag for epigenetic transcriptional activation. In addition performs automethylation. Acetylation and phosphorylation of histone H3 attenuate or prevent histone H3 methylation. This is Histone-lysine N-methyltransferase PRDM9 from Homo sapiens (Human).